Reading from the N-terminus, the 81-residue chain is Ferredoxin (81 aa).

The 4Fe-4S ferredoxin-type domain maps to 2–30; sequence KYTIVDKETCIACGACGAAAPDIYDYDED. The [4Fe-4S] cluster site is built by cysteine 11, cysteine 14, cysteine 17, and cysteine 61.

[4Fe-4S] cluster serves as cofactor.

Functionally, ferredoxins are iron-sulfur proteins that transfer electrons in a wide variety of metabolic reactions. The protein is Ferredoxin (fer) of Geobacillus stearothermophilus (Bacillus stearothermophilus).